The chain runs to 665 residues: Probable potassium transport system protein Kup 2 (665 aa).

Transmembrane regions (helical) follow at residues 13–33 (GLLV…LYVM), 55–75 (ISLI…LIAL), 98–118 (WLVL…TLTP), 138–158 (IPVP…LFLF), 167–187 (IIGK…GLTG), 195–215 (LSLL…SPAN), 217–237 (VGVL…ALYS), 250–270 (SWPY…VWIL), 295–315 (FFAI…LITG), 344–364 (IFIP…VFLF), 375–395 (GLAI…YLSL), 400–420 (ILLR…FLIS), and 428–448 (GGYV…IWYF).

The protein belongs to the HAK/KUP transporter (TC 2.A.72) family.

Its subcellular location is the cell membrane. It catalyses the reaction K(+)(in) + H(+)(in) = K(+)(out) + H(+)(out). Its function is as follows. Transport of potassium into the cell. Likely operates as a K(+):H(+) symporter. The protein is Probable potassium transport system protein Kup 2 of Lactobacillus johnsonii (strain CNCM I-12250 / La1 / NCC 533).